A 617-amino-acid polypeptide reads, in one-letter code: uncharacterized protein (617 aa).

Polar residues predominate over residues 387 to 396; sequence NGGMSATQLP. Disordered regions lie at residues 387 to 419 and 443 to 599; these read NGGM…HAAP and YDDF…NNEQ. The segment covering 404 to 414 has biased composition (low complexity); sequence RQAAANQFQQR. Over residues 453–474 the composition is skewed to polar residues; the sequence is QPLTQQQKDAARQRYQSASPEQ. Composition is skewed to basic and acidic residues over residues 490-499 and 522-531; these read QRREAARERI and QRRDAARERI. Residues 549 to 570 are compositionally biased toward polar residues; sequence RPLNQQQRDNARQRVQSASPEQ. Basic and acidic residues predominate over residues 572–585; sequence QVFREKVQESRPQR. A compositionally biased stretch (polar residues) spans 586–599; it reads LNDSNHTVRLNNEQ.

This is an uncharacterized protein from Escherichia coli (strain K12).